The following is a 180-amino-acid chain: Putative adenylate kinase (180 aa).

ATP contacts are provided by G10, G12, K13, T14, and T15. The tract at residues 30 to 50 (NLRDFALEKGCGREVDGEVEV) is NMP. Residues 99 to 109 (ERGYSKEKIGE) form an LID region. 2 residues coordinate ATP: R100 and K138.

Belongs to the adenylate kinase family. AK6 subfamily. As to quaternary structure, interacts with uS11. Not a structural component of 40S pre-ribosomes, but transiently interacts with them by binding to uS11.

It carries out the reaction AMP + ATP = 2 ADP. The enzyme catalyses ATP + H2O = ADP + phosphate + H(+). In terms of biological role, broad-specificity nucleoside monophosphate (NMP) kinase that catalyzes the reversible transfer of the terminal phosphate group between nucleoside triphosphates and monophosphates. Also has ATPase activity. Involved in the late maturation steps of the 30S ribosomal particles, specifically 16S rRNA maturation. While NMP activity is not required for ribosome maturation, ATPase activity is. Associates transiently with small ribosomal subunit protein uS11. ATP hydrolysis breaks the interaction with uS11. May temporarily remove uS11 from the ribosome to enable a conformational change of the ribosomal RNA that is needed for the final maturation step of the small ribosomal subunit. The chain is Putative adenylate kinase from Pyrococcus abyssi (strain GE5 / Orsay).